Reading from the N-terminus, the 350-residue chain is Spermidine/putrescine import ATP-binding protein PotA (350 aa).

Residues 6–236 (LELRNVTKDY…PENLWVAKFI (231 aa)) enclose the ABC transporter domain. Residue 38 to 45 (GPSGCGKT) participates in ATP binding.

This sequence belongs to the ABC transporter superfamily. Spermidine/putrescine importer (TC 3.A.1.11.1) family. The complex is composed of two ATP-binding proteins (PotA), two transmembrane proteins (PotB and PotC) and a solute-binding protein (PotD).

The protein resides in the cell membrane. The enzyme catalyses ATP + H2O + polyamine-[polyamine-binding protein]Side 1 = ADP + phosphate + polyamineSide 2 + [polyamine-binding protein]Side 1.. Its function is as follows. Part of the ABC transporter complex PotABCD involved in spermidine/putrescine import. Responsible for energy coupling to the transport system. This chain is Spermidine/putrescine import ATP-binding protein PotA, found in Mesoplasma florum (strain ATCC 33453 / NBRC 100688 / NCTC 11704 / L1) (Acholeplasma florum).